The following is a 120-amino-acid chain: UPF0102 protein Pfl01_4685 (120 aa).

It belongs to the UPF0102 family.

The sequence is that of UPF0102 protein Pfl01_4685 from Pseudomonas fluorescens (strain Pf0-1).